Here is a 304-residue protein sequence, read N- to C-terminus: Hairy/enhancer-of-split related with YRPW motif protein 1 (304 aa).

The interval 1–52 (MKRAHPEYSSSDSELDETIEVEKESADENGNLSSALGSMSPTTSSQILARKR) is disordered. A compositionally biased stretch (polar residues) spans 28 to 47 (ENGNLSSALGSMSPTTSSQI). The tract at residues 48-117 (LARKRRRGII…GGKGYFDAHA (70 aa)) is transcriptional repression and interaction with NCOR1 and SIN3A. Positions 49–104 (ARKRRRGIIEKRRRDRINNSLSELRRLVPSAFEKQGSAKLEKAEILQMTVDHLKML) constitute a bHLH domain. Positions 122-158 (YRSLGFRECLAEVARYLSIIEGLDASDPLRVRLVSHL) constitute an Orange domain. The segment at 196–234 (LPQNGHGNAGTTASPTEPHHQGRLGSAHPEAPALRAPPS) is disordered. Polar residues predominate over residues 200–210 (GHGNAGTTASP). Positions 294–297 (YRPW) match the YRPW motif motif.

The protein belongs to the HEY family. As to quaternary structure, self-associates. Interacts with HES1 and HEYL. Interacts with HDAC1, NCOR1 and SIN3A. Interacts with GATA4 and GATA6. Interacts with CCDC89/BOIP. As to expression, expressed in the somitic mesoderm, the central nervous system, the kidney, the heart, nasal epithelium, and limbs.

It is found in the nucleus. Functionally, transcriptional repressor which binds preferentially to the canonical E box sequence 5'-CACGTG-3'. Downstream effector of Notch signaling required for cardiovascular development. Specifically required for the Notch-induced endocardial epithelial to mesenchymal transition, which is itself criticial for cardiac valve and septum development. May be required in conjunction with HEY2 to specify arterial cell fate or identity. Promotes maintenance of neuronal precursor cells and glial versus neuronal fate specification. Represses transcription by the cardiac transcriptional activators GATA4 and GATA6 and by the neuronal bHLH factors ASCL1/MASH1 and NEUROD4/MATH3. Involved in the regulation of liver cancer cells self-renewal. This chain is Hairy/enhancer-of-split related with YRPW motif protein 1 (HEY1), found in Homo sapiens (Human).